Consider the following 245-residue polypeptide: Ribonuclease 3 (245 aa).

One can recognise an RNase III domain in the interval 17 to 146 (FTDKMKSLGL…FVGALYLDQG (130 aa)). Residue E59 coordinates Mg(2+). Residue D63 is part of the active site. The Mg(2+) site is built by D132 and E135. The active site involves E135. A DRBM domain is found at 172-241 (DFKTQFQEYV…AEQAYKLMKN (70 aa)).

This sequence belongs to the ribonuclease III family. Homodimer. Mg(2+) is required as a cofactor.

The protein resides in the cytoplasm. It catalyses the reaction Endonucleolytic cleavage to 5'-phosphomonoester.. Functionally, digests double-stranded RNA. Involved in the processing of primary rRNA transcript to yield the immediate precursors to the large and small rRNAs (23S and 16S). Processes some mRNAs, and tRNAs when they are encoded in the rRNA operon. Processes pre-crRNA and tracrRNA of type II CRISPR loci if present in the organism. This Staphylococcus epidermidis (strain ATCC 35984 / DSM 28319 / BCRC 17069 / CCUG 31568 / BM 3577 / RP62A) protein is Ribonuclease 3.